Reading from the N-terminus, the 298-residue chain is Probable alpha-L-glutamate ligase (298 aa).

One can recognise an ATP-grasp domain in the interval 104–287; that stretch reads MQLLSRHGIG…VAGKIIEFLE (184 aa). ATP is bound by residues K141, 178-179, D187, and 211-213; these read EY and RSN. Mg(2+) is bound by residues D248, E260, and N262. Mn(2+)-binding residues include D248, E260, and N262.

The protein belongs to the RimK family. Mg(2+) serves as cofactor. It depends on Mn(2+) as a cofactor.

The chain is Probable alpha-L-glutamate ligase from Aeromonas salmonicida (strain A449).